Here is a 460-residue protein sequence, read N- to C-terminus: Argininosuccinate lyase (460 aa).

Belongs to the lyase 1 family. Argininosuccinate lyase subfamily.

The protein localises to the cytoplasm. It carries out the reaction 2-(N(omega)-L-arginino)succinate = fumarate + L-arginine. It participates in amino-acid biosynthesis; L-arginine biosynthesis; L-arginine from L-ornithine and carbamoyl phosphate: step 3/3. The polypeptide is Argininosuccinate lyase (Mannheimia succiniciproducens (strain KCTC 0769BP / MBEL55E)).